Here is a 349-residue protein sequence, read N- to C-terminus: tRNA pseudouridine synthase D (349 aa).

F27 is a binding site for substrate. D80 functions as the Nucleophile in the catalytic mechanism. N129 contributes to the substrate binding site. The 149-residue stretch at 155–303 (GVPNYFGAQR…VEAARRAMLL (149 aa)) folds into the TRUD domain. A substrate-binding site is contributed by F329.

This sequence belongs to the pseudouridine synthase TruD family.

It catalyses the reaction uridine(13) in tRNA = pseudouridine(13) in tRNA. Its function is as follows. Responsible for synthesis of pseudouridine from uracil-13 in transfer RNAs. This chain is tRNA pseudouridine synthase D, found in Escherichia coli O45:K1 (strain S88 / ExPEC).